The sequence spans 485 residues: Amyloid beta A4 precursor protein-binding family B member 1-interacting protein (485 aa).

Polar residues predominate over residues 84–107 (QAQKTSGNQQSVVTQPSTGTNNDF). Positions 84–157 (QAQKTSGNQQ…LSQEEQEARA (74 aa)) are disordered. Positions 125-147 (LPPPPPAPDLDLPPPPPPPPPEP) are enriched in pro residues. A Ras-associating domain is found at 175-262 (KKLVVKVHMY…KVLFLEKKEK (88 aa)). In terms of domain architecture, PH spans 305 to 414 (VPELEGALYL…WVTGIRIAKY (110 aa)).

It belongs to the MRL family.

It is found in the cell membrane. The protein localises to the cytoplasm. It localises to the cytoskeleton. In terms of biological role, appears to function in the signal transduction from Ras activation to actin cytoskeletal remodeling. This Gallus gallus (Chicken) protein is Amyloid beta A4 precursor protein-binding family B member 1-interacting protein (APBB1IP).